We begin with the raw amino-acid sequence, 648 residues long: Threonine--tRNA ligase (648 aa).

Residues 1–62 (MVEIILPDGS…PHGAQVAIIT (62 aa)) enclose the TGS domain. Positions 243–536 (DHRRIGKDLD…LVEHYAGWFP (294 aa)) are catalytic. Zn(2+) is bound by residues Cys-336, His-387, and His-513.

Belongs to the class-II aminoacyl-tRNA synthetase family. Homodimer. Zn(2+) is required as a cofactor.

Its subcellular location is the cytoplasm. The enzyme catalyses tRNA(Thr) + L-threonine + ATP = L-threonyl-tRNA(Thr) + AMP + diphosphate + H(+). Catalyzes the attachment of threonine to tRNA(Thr) in a two-step reaction: L-threonine is first activated by ATP to form Thr-AMP and then transferred to the acceptor end of tRNA(Thr). Also edits incorrectly charged L-seryl-tRNA(Thr). This Magnetococcus marinus (strain ATCC BAA-1437 / JCM 17883 / MC-1) protein is Threonine--tRNA ligase.